Reading from the N-terminus, the 212-residue chain is ER lumen protein-retaining receptor 2 (212 aa).

The Lumenal portion of the chain corresponds to 1–4; the sequence is MNIF. The chain crosses the membrane as a helical span at residues 5 to 24; it reads RLTGDLSHLAAIIILLLKIW. Residues 25–32 lie on the Cytoplasmic side of the membrane; it reads KSRSCAGI. The helical transmembrane segment at 33–52 threads the bilayer; sequence SGKSQLLFALVFTTRYLDLF. Positions 47–48 are interaction with the K-D-E-L motif on target proteins; it reads RY. The Lumenal segment spans residues 53–58; sequence TSFISL. The chain crosses the membrane as a helical span at residues 59 to 79; the sequence is YNTSMKLIYIACSYATVYLIY. Over 80 to 92 the chain is Cytoplasmic; sequence MKFKATYDGNHDT. A helical transmembrane segment spans residues 93-110; that stretch reads FRVEFLIVPVGGLSFLVN. Residues 111–116 are Lumenal-facing; the sequence is HDFSPL. Residues 117 to 135 traverse the membrane as a helical segment; sequence EILWTFSIYLESVAILPQL. At 136–149 the chain is on the cytoplasmic side; that stretch reads FMISKTGEAETITT. The helical transmembrane segment at 150–168 threads the bilayer; it reads HYLFFLGLYRALYLVNWIW. Residues 159–169 are interaction with the K-D-E-L motif on target proteins; it reads RALYLVNWIWR. Topologically, residues 169 to 178 are lumenal; that stretch reads RYYFEGFFDL. The chain crosses the membrane as a helical span at residues 179–199; that stretch reads IAVVAGVVQTVLYCDFFYLYV. The Cytoplasmic segment spans residues 200–212; that stretch reads TKVLKGKKLSLPA. The tract at residues 204–207 is important for recycling of cargo proteins with the sequence motif K-D-E-L from the Golgi to the endoplasmic reticulum; that stretch reads KGKK.

This sequence belongs to the ERD2 family.

It localises to the endoplasmic reticulum membrane. The protein localises to the golgi apparatus membrane. Its subcellular location is the cytoplasmic vesicle. It is found in the COPI-coated vesicle membrane. Membrane receptor that binds the K-D-E-L sequence motif in the C-terminal part of endoplasmic reticulum resident proteins and maintains their localization in that compartment by participating to their vesicle-mediated recycling back from the Golgi. Binding is pH dependent, and is optimal at pH 5-5.4. The chain is ER lumen protein-retaining receptor 2 (KDELR2) from Gallus gallus (Chicken).